The following is a 132-amino-acid chain: Small ribosomal subunit protein uS8 (132 aa).

This sequence belongs to the universal ribosomal protein uS8 family. Part of the 30S ribosomal subunit. Contacts proteins S5 and S12.

One of the primary rRNA binding proteins, it binds directly to 16S rRNA central domain where it helps coordinate assembly of the platform of the 30S subunit. This Rickettsia typhi (strain ATCC VR-144 / Wilmington) protein is Small ribosomal subunit protein uS8.